A 927-amino-acid polypeptide reads, in one-letter code: DNA-binding protein RFX6 (927 aa).

Disordered stretches follow at residues 1–21 (MAKV…PQLP) and 81–108 (NFSS…QKKS). A DNA-binding region (RFX-type winged-helix) is located at residues 123 to 198 (TLQWLEDNYI…YHYYGIGIKE (76 aa)).

Belongs to the RFX family. Interacts with RFX3. In the adult pancreas, expression is restricted to the islets where it could be detected in all endocrine lineages.

It localises to the nucleus. Transcription factor required to direct islet cell differentiation during endocrine pancreas development. Specifically required for the differentiation of 4 of the 5 islet cell types and for the production of insulin. Not required for pancreatic PP (polypeptide-producing) cells differentiation. Acts downstream of NEUROG3 and regulates the transcription factors involved in beta-cell maturation and function, thereby restricting the expression of the beta-cell differentiation and specification genes, and thus the beta-cell fate choice. Activates transcription by forming a heterodimer with RFX3 and binding to the X-box in the promoter of target genes. Involved in glucose-stimulated insulin secretion by promoting insulin and L-type calcium channel gene transcription. The protein is DNA-binding protein RFX6 (Rfx6) of Mus musculus (Mouse).